The primary structure comprises 569 residues: Matrix metalloproteinase-21 (569 aa).

Positions 1 to 24 (MLAASIFRPTLLLCWLAAPWPTQP) are cleaved as a signal peptide. The propeptide occupies 25-144 (ESLFHSRDRS…GPPPRARSRR (120 aa)). Positions 115–122 (PRCGVPDM) match the Cysteine switch motif. Residues 115–166 (PRCGVPDMRPPPPSAPPSPPGPPPRARSRRSPRAPLSLSRRGWQPRGYPDGG) are disordered. Cysteine 117 is a Zn(2+) binding site. A compositionally biased stretch (pro residues) spans 122–139 (MRPPPPSAPPSPPGPPPR). Residues 147-156 (RAPLSLSRRG) show a composition bias toward low complexity. A Zn(2+)-binding site is contributed by histidine 283. Glutamate 284 is a catalytic residue. Zn(2+) is bound by residues histidine 287 and histidine 293. A disulfide bond links cysteine 329 and cysteine 560. Hemopexin repeat units follow at residues 330–389 (EGSF…WPGI), 391–447 (THNI…FPGI), 448–496 (PSPL…FPAV), and 503–559 (FRNI…WFDV). Asparagine 372 carries N-linked (GlcNAc...) asparagine glycosylation.

It belongs to the peptidase M10A family. Zn(2+) serves as cofactor. Requires Ca(2+) as cofactor. The precursor is cleaved by a furin endopeptidase. As to expression, identified in fetal brain, kidney and liver. In adult tissues found primarily in ovary, kidney, liver, lung, placenta, brain and peripheral blood leukocytes. Expressed as well in various cancer cell lines.

The protein localises to the secreted. Functionally, plays a specialized role in the generation of left-right asymmetry during embryogenesis. May act as a negative regulator of the NOTCH-signaling pathway. Cleaves alpha-1-antitrypsin. The sequence is that of Matrix metalloproteinase-21 (MMP21) from Homo sapiens (Human).